The sequence spans 375 residues: Probable aminomethyltransferase (375 aa).

The protein belongs to the GcvT family. The glycine cleavage system is composed of four proteins: P, T, L and H.

The enzyme catalyses N(6)-[(R)-S(8)-aminomethyldihydrolipoyl]-L-lysyl-[protein] + (6S)-5,6,7,8-tetrahydrofolate = N(6)-[(R)-dihydrolipoyl]-L-lysyl-[protein] + (6R)-5,10-methylene-5,6,7,8-tetrahydrofolate + NH4(+). Its function is as follows. The glycine cleavage system catalyzes the degradation of glycine. In Aeropyrum pernix (strain ATCC 700893 / DSM 11879 / JCM 9820 / NBRC 100138 / K1), this protein is Probable aminomethyltransferase.